The sequence spans 338 residues: Inorganic pyrophosphatase (338 aa).

Position 129 (Arg129) interacts with diphosphate. Mg(2+) is bound by residues Asp166, Asp171, and Asp203.

It belongs to the PPase family. In terms of assembly, component of the NURF complex composed of Caf1-55, E(bx), Nurf-38 and Iswi. Mg(2+) is required as a cofactor.

It is found in the cytoplasm. The protein resides in the nucleus. It catalyses the reaction diphosphate + H2O = 2 phosphate + H(+). Its function is as follows. Component of NURF (nucleosome remodeling factor), a complex which catalyzes ATP-dependent nucleosome sliding and facilitates transcription of chromatin. NURF is required for homeotic gene expression, proper larval blood cell development, normal male X chromosome morphology, ecdysteroid signaling and metamorphosis. Inorganic pyrophosphatase (PPase), hydrolyzes inorganic pyrophosphate to inorganic phosphate, essential for driving critical biosynthetic reactions including transcription, replication, and DNA repair. This Drosophila melanogaster (Fruit fly) protein is Inorganic pyrophosphatase (Nurf-38).